Reading from the N-terminus, the 502-residue chain is Glutamate decarboxylase 1 (502 aa).

A Phosphoserine modification is found at serine 8. Lysine 277 carries the post-translational modification N6-(pyridoxal phosphate)lysine. The calmodulin-binding stretch occupies residues 469–502 (LMVTVKKSDIDKQRDIITGWKKFVADRKKTSGIC).

The protein belongs to the group II decarboxylase family. Homohexamer. Interacts with calmodulin with a 1:3 stoichiometry. Requires pyridoxal 5'-phosphate as cofactor. Expressed in roots. Detected at low levels in shoots of young seedlings. Not detected in the root tips or in the central vascular bundle in the elongating region of mature roots.

It carries out the reaction L-glutamate + H(+) = 4-aminobutanoate + CO2. Its activity is regulated as follows. Up-regulated by calmodulin binding at physiological pH. Its function is as follows. Catalyzes the conversion of glutamate to 4-aminobutanoate (GABA). The calmodulin-binding is calcium-dependent and it is proposed to directly or indirectly form a calcium regulated control of GABA biosynthesis. The polypeptide is Glutamate decarboxylase 1 (GAD1) (Arabidopsis thaliana (Mouse-ear cress)).